Consider the following 126-residue polypeptide: uncharacterized protein (126 aa).

The next 2 membrane-spanning stretches (helical) occupy residues 40-57 (IDKW…VSFF) and 72-94 (ILIA…ILGG).

It is found in the cell membrane. This is an uncharacterized protein from Pasteurella multocida (strain Pm70).